The chain runs to 134 residues: GSH-induced LITAF domain protein (134 aa).

In terms of domain architecture, LITAF spans 33-113; the sequence is DPLGAPIQQT…CGNKVADFEK (81 aa). Zn(2+) is bound by residues Cys53 and Cys56. The tract at residues 68–88 is membrane-binding amphipathic helix; sequence PGVAAVVACMMPFMLGFCFLC. Zn(2+) is bound by residues Cys101 and Cys104.

Belongs to the CDIP1/LITAF family. In terms of assembly, interacts (via N- and C-terminal) with MIEL1 and LSD1 (via N-terminus).

It is found in the cell membrane. Acts as a membrane anchor, bringing other regulators of programmed cell death (PCD) to the plasma membrane. Negatively regulates hypersensitive cell death. The chain is GSH-induced LITAF domain protein from Arabidopsis thaliana (Mouse-ear cress).